We begin with the raw amino-acid sequence, 276 residues long: ADP-dependent (S)-NAD(P)H-hydrate dehydratase (276 aa).

One can recognise a YjeF C-terminal domain in the interval 7 to 275; the sequence is TEEHVRATLP…DILPRVWKRF (269 aa). Residues A42, G104, and H149 each coordinate (6S)-NADPHX. AMP is bound by residues 186-190 and G215; that span reads KGNQT. D216 contributes to the (6S)-NADPHX binding site.

It belongs to the NnrD/CARKD family. As to quaternary structure, homotetramer. Requires Mg(2+) as cofactor.

The catalysed reaction is (6S)-NADHX + ADP = AMP + phosphate + NADH + H(+). It carries out the reaction (6S)-NADPHX + ADP = AMP + phosphate + NADPH + H(+). Functionally, catalyzes the dehydration of the S-form of NAD(P)HX at the expense of ADP, which is converted to AMP. Together with NAD(P)HX epimerase, which catalyzes the epimerization of the S- and R-forms, the enzyme allows the repair of both epimers of NAD(P)HX, a damaged form of NAD(P)H that is a result of enzymatic or heat-dependent hydration. The chain is ADP-dependent (S)-NAD(P)H-hydrate dehydratase from Bacillus subtilis (strain 168).